A 216-amino-acid polypeptide reads, in one-letter code: MVASAYSFMASTWASEEWKKTVIRQRLVEWRNQNTVTRIEKPTRLDRARALGYKAKQGIIVARVKVEKGGMDKQRPNSGRRPKRMGVYGFSPAKSLQFIAEEKAARKFPGLEVLGSYYVAEDGKYKYYEVILVDPHNPVIMSDPQFNWLKNPANRGRVFRGLTSAGRRTRGLLKSRGLKGTIHYKIARKKKEREQKKRHEASKYYRLAKYDRIPGK.

It belongs to the eukaryotic ribosomal protein eL15 family.

This chain is Large ribosomal subunit protein eL15, found in Metallosphaera sedula (strain ATCC 51363 / DSM 5348 / JCM 9185 / NBRC 15509 / TH2).